We begin with the raw amino-acid sequence, 148 residues long: Nickel and cobalt resistance protein CnrR (148 aa).

The N-terminal stretch at 1-26 (MMKSRTRRLSLSTLFGALLGVSVAAA) is a signal peptide. Residues 28-148 (LYYSHRNEAG…LIDALRRGSQ (121 aa)) are Periplasmic-facing. A coiled-coil region spans residues 54 to 117 (NEREILELKE…AAGDLQRATL (64 aa)).

This sequence to A.xylosoxydans NccX.

It localises to the periplasm. Functionally, cnrH alone is able to activate cnr expression, while both CnrY and CrnR (CnrX) are needed for nickel induction of CnrH. Has been suggested to bind nickel. The chain is Nickel and cobalt resistance protein CnrR (cnrR) from Cupriavidus metallidurans (strain ATCC 43123 / DSM 2839 / NBRC 102507 / CH34) (Ralstonia metallidurans).